The chain runs to 294 residues: Homoserine kinase (294 aa).

Position 83 to 93 (83 to 93 (RPKSGLGSSGA)) interacts with ATP.

It belongs to the GHMP kinase family. Homoserine kinase subfamily.

It localises to the cytoplasm. The catalysed reaction is L-homoserine + ATP = O-phospho-L-homoserine + ADP + H(+). Its pathway is amino-acid biosynthesis; L-threonine biosynthesis; L-threonine from L-aspartate: step 4/5. Catalyzes the ATP-dependent phosphorylation of L-homoserine to L-homoserine phosphate. This is Homoserine kinase from Pyrococcus abyssi (strain GE5 / Orsay).